A 356-amino-acid chain; its full sequence is Tyrosine recombinase XerS (356 aa).

Residues isoleucine 16 to threonine 121 enclose the Core-binding (CB) domain. The region spanning alanine 169–aspartate 354 is the Tyr recombinase domain. Active-site residues include arginine 210, lysine 234, histidine 306, arginine 309, and histidine 332. Catalysis depends on tyrosine 341, which acts as the O-(3'-phospho-DNA)-tyrosine intermediate.

Belongs to the 'phage' integrase family. XerS subfamily.

The protein resides in the cytoplasm. FtsK is required for recombination. Its function is as follows. Site-specific tyrosine recombinase, which acts by catalyzing the cutting and rejoining of the recombining DNA molecules. Essential to convert dimers of the bacterial chromosome into monomers to permit their segregation at cell division. This chain is Tyrosine recombinase XerS, found in Streptococcus equi subsp. zooepidemicus (strain H70).